Here is a 592-residue protein sequence, read N- to C-terminus: MAPSMKEIFSKDNFKKNKKLVLLSAAVALLFVAAVAGISAGASKANEKRTLSPSSHAVLRSSCSSTRYPELCISAVVTAGGVELTSQKDVIEASVNLTITAVEHNYFTVKKLIKKRKGLTPREKTALHDCLETIDETLDELHETVEDLHLYPTKKTLREHAGDLKTLISSAITNQETCLDGFSHDDADKQVRKALLKGQIHVEHMCSNALAMIKNMTDTDIANFEQKAKITSNNRKLKEENQETTVAVDIAGAGELDSEGWPTWLSAGDRRLLQGSGVKADATVAADGSGTFKTVAAAVAAAPENSNKRYVIHIKAGVYRENVEVAKKKKNIMFMGDGRTRTIITGSRNVVDGSTTFHSATVAAVGERFLARDITFQNTAGPSKHQAVALRVGSDFSAFYNCDMLAYQDTLYVHSNRQFFVKCLIAGTVDFIFGNAAVVLQDCDIHARRPNSGQKNMVTAQGRTDPNQNTGIVIQKCRIGATSDLQSVKGSFPTYLGRPWKEYSQTVIMQSAISDVIRPEGWSEWTGTFALNTLTYREYSNTGAGAGTANRVKWRGFKVITAAAEAQKYTAGQFIGGGGWLSSTGFPFSLGL.

An N-terminal signal peptide occupies residues 1–35 (MAPSMKEIFSKDNFKKNKKLVLLSAAVALLFVAAV). The propeptide at 36 to 238 (AGISAGASKA…KITSNNRKLK (203 aa)) is removed in mature 42 kDa form. Positions 36–273 (AGISAGASKA…WLSAGDRRLL (238 aa)) are cleaved as a propeptide — removed in mature 38 kDa form. Positions 53–212 (PSSHAVLRSS…EHMCSNALAM (160 aa)) are pectinesterase inhibitor 3. Residues N96 and N215 are each glycosylated (N-linked (GlcNAc...) asparagine). The segment at 281-578 (DATVAADGSG…YTAGQFIGGG (298 aa)) is pectinesterase 3. T356 and Q386 together coordinate substrate. The active-site Proton donor; for pectinesterase activity is the D409. C423 and C443 are disulfide-bonded. D430 (nucleophile; for pectinesterase activity) is an active-site residue. Residues Q454, R498, and W500 each contribute to the substrate site.

In the N-terminal section; belongs to the PMEI family. This sequence in the C-terminal section; belongs to the pectinesterase family. In terms of assembly, interacts with BIIDXI and At5g11420. Binds reversibly to PMEI4, PMEI7 and PMEI8 to be inhibited; the stability of the PME3-PMEIs complexes and the inhibition of the pectin methylesterase (PME) activity is pH-dependent, based on protonation status of amino-acids at the complex interface. In terms of tissue distribution, expressed in roots, cotyledons, hypocotyls, seedlings, leaves, stems, flowers, dry seeds and siliques. Accumulates in etiolated hypocotyls (at protein level).

It is found in the secreted. Its subcellular location is the extracellular space. The protein resides in the apoplast. It localises to the cell wall. It catalyses the reaction [(1-&gt;4)-alpha-D-galacturonosyl methyl ester](n) + n H2O = [(1-&gt;4)-alpha-D-galacturonosyl](n) + n methanol + n H(+). It participates in glycan metabolism; pectin degradation; 2-dehydro-3-deoxy-D-gluconate from pectin: step 1/5. Its activity is regulated as follows. Regulated negatively by pectinesterase inhibitors (e.g. PMEI3, PMEI4, PMEI7 and PMEI9) in a pH-dependent manner, mainly in slightly acidic conditions (pH 6.0 and 5.0), especially in dark-grown hypocotyls; this processus relies on changes in the protonation of amino acids involved in intermolecular and intramolecular interactions. Its function is as follows. Acts in the modification of cell walls via demethylesterification of cell wall pectin. Required for zinc Zn(2+) homeostasis and to monitor Zn(2+) influence on cell wall-controlled growth processes such as root cell elongation. Monitors seed germination and favors root hairs production. Prevents cruciferin seed storage proteins activity, but promotes the expression of genes involved in cell wall organization and remodeling as well as genes involved in lipid and protein metabolism, during post-germinative growth of seedlings. Confers sensitivity to Zn(2+) when overexpressed. Acts as a susceptibility factor required for the initial colonization of the host tissue by virulent pathogens including Botrytis cinerea and Pectobacterium carotovorum, probably by facilitating cell wall pectine degradation by pathogen pectic enzymes after its demethylesterification. The protein is Pectinesterase/pectinesterase inhibitor 3 of Arabidopsis thaliana (Mouse-ear cress).